The chain runs to 183 residues: UPF0725 protein At4g11700 (183 aa).

Belongs to the UPF0725 (EMB2204) family.

This Arabidopsis thaliana (Mouse-ear cress) protein is UPF0725 protein At4g11700.